The primary structure comprises 564 residues: Dihydroxy-acid dehydratase (564 aa).

Residue cysteine 51 participates in [2Fe-2S] cluster binding. Aspartate 83 serves as a coordination point for Mg(2+). Residue cysteine 124 coordinates [2Fe-2S] cluster. Residues aspartate 125 and lysine 126 each coordinate Mg(2+). At lysine 126 the chain carries N6-carboxylysine. Cysteine 196 lines the [2Fe-2S] cluster pocket. Residue glutamate 448 participates in Mg(2+) binding. The active-site Proton acceptor is serine 474.

The protein belongs to the IlvD/Edd family. In terms of assembly, homodimer. [2Fe-2S] cluster is required as a cofactor. Requires Mg(2+) as cofactor.

It carries out the reaction (2R)-2,3-dihydroxy-3-methylbutanoate = 3-methyl-2-oxobutanoate + H2O. It catalyses the reaction (2R,3R)-2,3-dihydroxy-3-methylpentanoate = (S)-3-methyl-2-oxopentanoate + H2O. It participates in amino-acid biosynthesis; L-isoleucine biosynthesis; L-isoleucine from 2-oxobutanoate: step 3/4. It functions in the pathway amino-acid biosynthesis; L-valine biosynthesis; L-valine from pyruvate: step 3/4. Its function is as follows. Functions in the biosynthesis of branched-chain amino acids. Catalyzes the dehydration of (2R,3R)-2,3-dihydroxy-3-methylpentanoate (2,3-dihydroxy-3-methylvalerate) into 2-oxo-3-methylpentanoate (2-oxo-3-methylvalerate) and of (2R)-2,3-dihydroxy-3-methylbutanoate (2,3-dihydroxyisovalerate) into 2-oxo-3-methylbutanoate (2-oxoisovalerate), the penultimate precursor to L-isoleucine and L-valine, respectively. This chain is Dihydroxy-acid dehydratase, found in Pyrobaculum calidifontis (strain DSM 21063 / JCM 11548 / VA1).